The sequence spans 194 residues: Putative adenylate kinase (194 aa).

Gly16, Gly18, Lys19, Thr20, and Thr21 together coordinate ATP. Residues 36 to 59 (SVGELLAGTPYVTYIPELDTYEIV) form an NMP region. Residues 108–118 (RRGWPLKKILD) form an LID region. Arg109 provides a ligand contact to ATP.

It belongs to the adenylate kinase family. AK6 subfamily. Interacts with uS11. Not a structural component of 40S pre-ribosomes, but transiently interacts with them by binding to uS11.

The enzyme catalyses AMP + ATP = 2 ADP. It catalyses the reaction ATP + H2O = ADP + phosphate + H(+). Its function is as follows. Broad-specificity nucleoside monophosphate (NMP) kinase that catalyzes the reversible transfer of the terminal phosphate group between nucleoside triphosphates and monophosphates. Also has ATPase activity. Involved in the late maturation steps of the 30S ribosomal particles, specifically 16S rRNA maturation. While NMP activity is not required for ribosome maturation, ATPase activity is. Associates transiently with small ribosomal subunit protein uS11. ATP hydrolysis breaks the interaction with uS11. May temporarily remove uS11 from the ribosome to enable a conformational change of the ribosomal RNA that is needed for the final maturation step of the small ribosomal subunit. The sequence is that of Putative adenylate kinase from Pyrobaculum aerophilum (strain ATCC 51768 / DSM 7523 / JCM 9630 / CIP 104966 / NBRC 100827 / IM2).